A 179-amino-acid chain; its full sequence is Disulfide bond formation protein B (179 aa).

Residues 1–14 (MLSYFKELSLRRPA) are Cytoplasmic-facing. Residues 15–31 (WLLLATLACTLEVTGLY) traverse the membrane as a helical segment. Residues 32–49 (FQHKLGLIPCVMCIYERV) lie on the Periplasmic side of the membrane. An intrachain disulfide couples C41 to C44. The chain crosses the membrane as a helical span at residues 50 to 65 (ALTGLLIAGLIALIAP). Over 66–72 (NFFLFRW) the chain is Cytoplasmic. A helical transmembrane segment spans residues 73-90 (LALVLWGFSAFKGLSLSI). Topologically, residues 91-146 (KHYDYQANPSPWNQCEFKPQFPQTIPLDEWFPNIFAAGTVNCSEKQWQMLGWGMPE) are periplasmic. C105 and C132 are joined by a disulfide. The helical transmembrane segment at 147-165 (WLIVAFSLFMLFFLIVFMS) threads the bilayer. At 166–179 (QFKRAKPQYRSVFR) the chain is on the cytoplasmic side.

Belongs to the DsbB family.

It localises to the cell inner membrane. In terms of biological role, required for disulfide bond formation in some periplasmic proteins. Acts by oxidizing the DsbA protein. The sequence is that of Disulfide bond formation protein B from Haemophilus ducreyi (strain 35000HP / ATCC 700724).